A 219-amino-acid chain; its full sequence is Virginiamycin A acetyltransferase (219 aa).

Residue H87 is part of the active site.

The protein belongs to the transferase hexapeptide repeat family.

Its function is as follows. Inactivates the A compounds of virginiamycin-like antibiotics, thus providing resistance to these antibiotics. The polypeptide is Virginiamycin A acetyltransferase (vat) (Staphylococcus aureus).